A 564-amino-acid chain; its full sequence is Alpha-farnesene synthase (564 aa).

Residues aspartate 313, aspartate 317, threonine 464, and glutamate 468 each contribute to the Mg(2+) site. Residues 313–317 (DDVYD) carry the DDXXD motif motif.

The protein belongs to the terpene synthase family. Requires Mg(2+) as cofactor.

It catalyses the reaction (2E,6E)-farnesyl diphosphate = (3E,6E)-alpha-farnesene + diphosphate. Catalyzes the cyclization of farnesyl diphosphate to (E,E)-alpha-farnesene. This is Alpha-farnesene synthase (TPS7) from Ricinus communis (Castor bean).